The sequence spans 515 residues: Peroxisomal catalase A (515 aa).

N-acetylserine is present on serine 2. Catalysis depends on residues histidine 70 and asparagine 143. Residue tyrosine 355 coordinates heme. The Microbody targeting signal motif lies at 513–515; the sequence is SKF.

It belongs to the catalase family. As to quaternary structure, homotetramer. The cofactor is heme.

The protein resides in the peroxisome matrix. It carries out the reaction 2 H2O2 = O2 + 2 H2O. Catalyzes the degradation of hydrogen peroxide (H(2)O(2)) generated by peroxisomal oxidases to water and oxygen, thereby protecting cells from the toxic effects of hydrogen peroxide. This chain is Peroxisomal catalase A (CTA1), found in Saccharomyces cerevisiae (strain ATCC 204508 / S288c) (Baker's yeast).